The sequence spans 173 residues: Small ribosomal subunit protein uS9 (173 aa).

Residues 20–53 (SYTTESEVPVEGEYTSESVASRFGEPQPAAGLGR) form a disordered region.

This sequence belongs to the universal ribosomal protein uS9 family.

The protein is Small ribosomal subunit protein uS9 of Streptomyces avermitilis (strain ATCC 31267 / DSM 46492 / JCM 5070 / NBRC 14893 / NCIMB 12804 / NRRL 8165 / MA-4680).